The primary structure comprises 107 residues: C-X-C motif chemokine 2 (107 aa).

The N-terminal stretch at methionine 1 to glycine 34 is a signal peptide. 2 disulfides stabilise this stretch: cysteine 43/cysteine 69 and cysteine 45/cysteine 85.

Belongs to the intercrine alpha (chemokine CxC) family. In terms of processing, the N-terminal processed form GRO-beta(5-73) is produced by proteolytic cleavage after secretion from bone marrow stromal cells.

The protein resides in the secreted. In terms of biological role, produced by activated monocytes and neutrophils and expressed at sites of inflammation. Hematoregulatory chemokine, which, in vitro, suppresses hematopoietic progenitor cell proliferation. GRO-beta(5-73) shows a highly enhanced hematopoietic activity. The polypeptide is C-X-C motif chemokine 2 (CXCL2) (Homo sapiens (Human)).